We begin with the raw amino-acid sequence, 391 residues long: Thioredoxin-interacting protein (391 aa).

Residue Lys212 forms a Glycyl lysine isopeptide (Lys-Gly) (interchain with G-Cter in ubiquitin) linkage. Ser361 bears the Phosphoserine mark.

It belongs to the arrestin family. As to quaternary structure, homodimer; disulfide-linked. Interacts with TXN/thioredoxin through its redox-active site. Interacts with transcriptional repressors ZBTB16, ZBTB32 and HDAC1. Interacts with DDIT4. In terms of processing, ubiquitinated; undergoes heterotypic 'Lys-48'-/'Lys-63'-branched polyubiquitination catalyzed by ITCH and UBR5 resulting in proteasomal degradation. Deubiquitinated by USP5, leading to TXNIP stabilization.

The protein localises to the cytoplasm. Its subcellular location is the nucleus. May act as an oxidative stress mediator by inhibiting thioredoxin activity or by limiting its bioavailability. Interacts with COPS5 and restores COPS5-induced suppression of CDKN1B stability, blocking the COPS5-mediated translocation of CDKN1B from the nucleus to the cytoplasm. Functions as a transcriptional repressor, possibly by acting as a bridge molecule between transcription factors and corepressor complexes, and over-expression will induce G0/G1 cell cycle arrest. Required for the maturation of natural killer cells. Acts as a suppressor of tumor cell growth. Inhibits the proteasomal degradation of DDIT4, and thereby contributes to the inhibition of the mammalian target of rapamycin complex 1 (mTORC1). The chain is Thioredoxin-interacting protein (TXNIP) from Homo sapiens (Human).